The following is an 81-amino-acid chain: uncharacterized protein (81 aa).

This is an uncharacterized protein from Caenorhabditis elegans.